We begin with the raw amino-acid sequence, 553 residues long: Formate--tetrahydrofolate ligase 2 (553 aa).

63 to 70 lines the ATP pocket; the sequence is TSAGEGKS.

This sequence belongs to the formate--tetrahydrofolate ligase family.

The enzyme catalyses (6S)-5,6,7,8-tetrahydrofolate + formate + ATP = (6R)-10-formyltetrahydrofolate + ADP + phosphate. It functions in the pathway one-carbon metabolism; tetrahydrofolate interconversion. This is Formate--tetrahydrofolate ligase 2 from Lactobacillus acidophilus (strain ATCC 700396 / NCK56 / N2 / NCFM).